A 107-amino-acid chain; its full sequence is Nucleoid-associated protein Lferr_1592 (107 aa).

Belongs to the YbaB/EbfC family. In terms of assembly, homodimer.

Its subcellular location is the cytoplasm. The protein resides in the nucleoid. Binds to DNA and alters its conformation. May be involved in regulation of gene expression, nucleoid organization and DNA protection. The sequence is that of Nucleoid-associated protein Lferr_1592 from Acidithiobacillus ferrooxidans (strain ATCC 53993 / BNL-5-31) (Leptospirillum ferrooxidans (ATCC 53993)).